The chain runs to 222 residues: Methionine import system permease protein MetP (222 aa).

Residues 18-212 (TYETLYMTLI…IIVFIIQIIG (195 aa)) enclose the ABC transmembrane type-1 domain. 5 consecutive transmembrane segments (helical) span residues 25–45 (TLIS…LLFL), 73–93 (FLIL…TILG), 97–117 (ALPA…EIAL), 152–172 (ISGI…AGAI), and 195–215 (FVAT…GDLI).

This sequence belongs to the binding-protein-dependent transport system permease family. CysTW subfamily. In terms of assembly, the complex is composed of two ATP-binding proteins (MetN), two transmembrane proteins (MetP) and a solute-binding protein (MetQ).

The protein resides in the cell membrane. Part of the ABC transporter complex MetNPQ involved in methionine import. Responsible for the translocation of the substrate across the membrane. It has also been shown to be involved in methionine sulfoxide transport. The protein is Methionine import system permease protein MetP (metP) of Bacillus subtilis (strain 168).